Here is a 163-residue protein sequence, read N- to C-terminus: MASEHSFDISAALDKQELKNAFEQAKKELDSRYDLKGIKCEIDLSEKESIFKLSSSSEGKLDVLKDIVISKLIKRGINPNAIKELSRESGAMFRLNLKANDAIDSENAKKINKAIKDSKLKVNSSIRGEEIRVVAKQIDDLQAVMKLVKELDLELNISFKNLK.

Belongs to the YajQ family.

Nucleotide-binding protein. The chain is Nucleotide-binding protein CJE0423 from Campylobacter jejuni (strain RM1221).